A 194-amino-acid chain; its full sequence is Adenylate kinase isoenzyme 1 (194 aa).

Ala-2 is subject to N-acetylalanine. 18–23 (GSGKGT) contacts ATP. The interval 38-67 (SSGDLLRAEVASGSERGKQLQAIMQKGELV) is NMP. AMP contacts are provided by residues Ser-39, Arg-44, 65–67 (ELV), 94–97 (GYPR), and Gln-101. Residues 131 to 141 (KRGQTSGRSDD) form an LID region. Arg-132 is an ATP binding site. Residues Arg-138 and Arg-149 each coordinate AMP. Position 177 (Leu-177) interacts with ATP.

This sequence belongs to the adenylate kinase family. AK1 subfamily. In terms of assembly, monomer. Mg(2+) is required as a cofactor.

Its subcellular location is the cytoplasm. It catalyses the reaction a ribonucleoside 5'-phosphate + ATP = a ribonucleoside 5'-diphosphate + ADP. The catalysed reaction is AMP + ATP = 2 ADP. It carries out the reaction dAMP + ATP = dADP + ADP. The enzyme catalyses dATP + AMP = dADP + ADP. It catalyses the reaction dAMP + dATP = 2 dADP. The catalysed reaction is a 2'-deoxyribonucleoside 5'-diphosphate + ATP = a 2'-deoxyribonucleoside 5'-triphosphate + ADP. It carries out the reaction a ribonucleoside 5'-diphosphate + ATP = a ribonucleoside 5'-triphosphate + ADP. The enzyme catalyses CDP + GTP = CTP + GDP. It catalyses the reaction GDP + ATP = GTP + ADP. The catalysed reaction is UDP + ATP = UTP + ADP. It carries out the reaction GTP + UDP = UTP + GDP. The enzyme catalyses dTDP + GTP = dTTP + GDP. It catalyses the reaction dCDP + GTP = dCTP + GDP. The catalysed reaction is dGDP + ATP = dGTP + ADP. It carries out the reaction dADP + GTP = dATP + GDP. The enzyme catalyses thiamine diphosphate + ADP = thiamine triphosphate + AMP. Its function is as follows. Catalyzes the reversible transfer of the terminal phosphate group between ATP and AMP. Also displays broad nucleoside diphosphate kinase activity. Plays an important role in cellular energy homeostasis and in adenine nucleotide metabolism. Also catalyzes at a very low rate the synthesis of thiamine triphosphate (ThTP) from thiamine diphosphate (ThDP) and ADP. This Cyprinus carpio (Common carp) protein is Adenylate kinase isoenzyme 1 (ak1).